Consider the following 82-residue polypeptide: Antimicrobial peptide Smp43 (82 aa).

The first 22 residues, methionine 1–alanine 22, serve as a signal peptide directing secretion. The propeptide occupies glutamate 66–serine 82.

The protein belongs to the non-disulfide-bridged peptide (NDBP) superfamily. Long chain multifunctional peptide (group 2) family. Expressed by the venom gland.

The protein resides in the secreted. Its subcellular location is the target cell membrane. Functionally, antimicrobial peptide with moderate activity against Gram-positive bacteria and Gram-negative bacteria, as well as low activity against fungi. Acts by inducing bacterial membrane disruption. Shows activity against B.subtilis (MIC=4 ug/ml), S.epidermidis (MIC=64 ug/ml), S.aureus (MIC=32 ug/ml), E.coli (MIC=128 ug/ml), K.pneumoniae (MIC=64 ug/ml), P.aeruginosa (MIC=64 ug/ml), and C.albicans (MIC=128 ug/ml). Does not show hemolysis activity. In Scorpio palmatus (Israeli golden scorpion), this protein is Antimicrobial peptide Smp43.